The sequence spans 288 residues: 18S rRNA aminocarboxypropyltransferase (288 aa).

S-adenosyl-L-methionine contacts are provided by Ser43, Val91, Leu114, and Trp129. The span at Ile209–Leu221 shows a compositional bias: polar residues. The tract at residues Ile209–Asn267 is disordered. The segment covering Asn229–Pro253 has biased composition (basic and acidic residues).

The protein belongs to the TDD superfamily. TSR3 family.

The protein resides in the cytoplasm. Its subcellular location is the nucleus. It catalyses the reaction an N(1)-methylpseudouridine in rRNA + S-adenosyl-L-methionine = N(1)-methyl-N(3)-[(3S)-3-amino-3-carboxypropyl]pseudouridine in rRNA + S-methyl-5'-thioadenosine + H(+). It carries out the reaction N(1)-methylpseudouridine(1191) in yeast 18S rRNA + S-adenosyl-L-methionine = N(1)-methyl-N(3)-[(3S)-3-amino-3-carboxypropyl]pseudouridine(1191) in yeast 18S rRNA + S-methyl-5'-thioadenosine + H(+). In terms of biological role, aminocarboxypropyltransferase that catalyzes the aminocarboxypropyl transfer on pseudouridine at position 1191 (Psi1191) in 18S rRNA. It constitutes the last step in biosynthesis of the hypermodified N1-methyl-N3-(3-amino-3-carboxypropyl) pseudouridine (m1acp3-Psi) conserved in eukaryotic 18S rRNA. Required for processing 35S pre-rRNA at site D. This chain is 18S rRNA aminocarboxypropyltransferase, found in Schizosaccharomyces pombe (strain 972 / ATCC 24843) (Fission yeast).